A 196-amino-acid polypeptide reads, in one-letter code: MATPTKVSAVAEITNDFKESNAAVLTEYRGLTVAQLKQLRVSLGQDTKFAVVKNTLTAIAAKEAGVEAFDGQLAGPTAIAFIKGDAVAAAKSLTDFAKTNKQLVIKTGYFEGKALNASEVAALAALESRELQLAKVAGILKAPAAAAARIIDALRLKLEEENGAPAAAEAPAAEEAPAAEAAETEAPAEAAATEEN.

Residues G163 to N196 form a disordered region. Residues A164 to N196 show a composition bias toward low complexity.

The protein belongs to the universal ribosomal protein uL10 family. In terms of assembly, part of the ribosomal stalk of the 50S ribosomal subunit. The N-terminus interacts with L11 and the large rRNA to form the base of the stalk. The C-terminus forms an elongated spine to which L12 dimers bind in a sequential fashion forming a multimeric L10(L12)X complex.

In terms of biological role, forms part of the ribosomal stalk, playing a central role in the interaction of the ribosome with GTP-bound translation factors. This chain is Large ribosomal subunit protein uL10, found in Arthrobacter sp. (strain FB24).